A 341-amino-acid chain; its full sequence is MGVQIGELIPRKEIELENLYGRRVAIDAFNAIYQFLSTIRQRDGTPLMDSQGRITSHLSGLFYRTINLMEAGIKPAYIFDGKPPDFKKRELEKRREAREEAEEKWYEALERGDLEEAKKYAMRATRVNEGLINDAKTLLELMGIPVIQAPSEGEAQAAYMAAKKKVYASASQDYDSLLFGAPKLVRNLTITGRRKLPGKNVYVEVKPELIVLEEVLKELSIDREKLIEMAILVGTDYNPGGIKGIGPKKALTIVKRTKDPLKKYQKESEVDLYAIKEFFLNPPVTDDYELKWREPDEEGIIKFLCDEHDFSEERVKNGLERLKKAVKAGKQSTLESWFGRR.

The tract at residues 1-98 (MGVQIGELIP…RELEKRREAR (98 aa)) is N-domain. Asp27, Asp80, Glu152, Glu154, Asp173, Asp175, and Asp236 together coordinate Mg(2+). The I-domain stretch occupies residues 116–258 (EAKKYAMRAT…KALTIVKRTK (143 aa)). An interaction with PCNA region spans residues 330-338 (KQSTLESWF).

The protein belongs to the XPG/RAD2 endonuclease family. FEN1 subfamily. As to quaternary structure, interacts with PCNA. PCNA stimulates the nuclease activity without altering cleavage specificity. It depends on Mg(2+) as a cofactor.

In terms of biological role, structure-specific nuclease with 5'-flap endonuclease and 5'-3' exonuclease activities involved in DNA replication and repair. During DNA replication, cleaves the 5'-overhanging flap structure that is generated by displacement synthesis when DNA polymerase encounters the 5'-end of a downstream Okazaki fragment. Binds the unpaired 3'-DNA end and kinks the DNA to facilitate 5' cleavage specificity. Cleaves one nucleotide into the double-stranded DNA from the junction in flap DNA, leaving a nick for ligation. Also involved in the base excision repair (BER) pathway. Acts as a genome stabilization factor that prevents flaps from equilibrating into structures that lead to duplications and deletions. Also possesses 5'-3' exonuclease activity on nicked or gapped double-stranded DNA. This is Flap endonuclease 1 from Thermococcus onnurineus (strain NA1).